The following is a 227-amino-acid chain: DNA repair protein RecO (227 aa).

This sequence belongs to the RecO family.

Functionally, involved in DNA repair and RecF pathway recombination. This is DNA repair protein RecO from Pseudomonas syringae pv. syringae (strain B728a).